The following is a 520-amino-acid chain: Signal peptide peptidase-like 2A (520 aa).

Residues 1–25 form the signal peptide; that stretch reads MGPQRRLSPAGAALLWGFLLQLTAA. The Lumenal portion of the chain corresponds to 26-172; the sequence is QEAILHASGN…PSWPNFDYTM (147 aa). N-linked (GlcNAc...) asparagine glycosylation is found at N58, N66, N74, N116, N126, and N149. The PA domain occupies 63–151; it reads SLMNLTSTPL…YKDFRDMNQT (89 aa). N155 carries N-linked (GlcNAc...) (complex) asparagine glycosylation. Residues 173 to 193 traverse the membrane as a helical segment; sequence VVIFVIAVFTVALGGYWSGLV. Over 194–220 the chain is Cytoplasmic; sequence ELENLKAVTTEDREMRKKKEEYLTFSP. A helical membrane pass occupies residues 221–241; sequence LTVVIFVVICCVMMVLLYFFY. At 242–247 the chain is on the lumenal side; the sequence is KWLVYV. A helical membrane pass occupies residues 248-268; the sequence is MIAIFCIASAMSLYNCLAALI. Residues 269-285 lie on the Cytoplasmic side of the membrane; the sequence is HKIPYGQCTIACRGKNM. The chain crosses the membrane as a helical span at residues 286-306; the sequence is EVRLIFLSGLCIAVAVVWAVF. The Lumenal segment spans residues 307 to 311; sequence RNEDR. A helical transmembrane segment spans residues 312 to 332; sequence WAWILQDILGIAFCLNLIKTL. Topologically, residues 333-340 are cytoplasmic; that stretch reads KLPNFKSC. The helical transmembrane segment at 341 to 361 threads the bilayer; sequence VILLGLLLLYDVFFVFITPFI. Residue D351 is part of the active site. Residues 362–399 are Lumenal-facing; that stretch reads TKNGESIMVELAAGPFGNNEKLPVVIRVPKLIYFSVMS. Residues 400-420 traverse the membrane as a helical segment; it reads VCLMPVSILGFGDIIVPGLLI. Residue D412 is part of the active site. Residues 421–437 lie on the Cytoplasmic side of the membrane; it reads AYCRRFDVQTGSSYIYY. The helical transmembrane segment at 438-458 threads the bilayer; the sequence is VSSTVAYAIGMILTFVVLVLM. Over 459–460 the chain is Lumenal; it reads KK. Residues 461-481 form a helical membrane-spanning segment; sequence GQPALLYLVPCTLITASVVAW. The PAL motif lies at 463 to 465; it reads PAL. The Cytoplasmic portion of the chain corresponds to 482–520; it reads RRKEMKKFWKGNSYQMMDHLDCATNEENPVISGEQIVQQ. A YXXo lysosomal targeting motif motif is present at residues 495 to 498; sequence YQMM.

This sequence belongs to the peptidase A22B family. Interacts with ITM2B. In terms of processing, glycosylated. Ubiquitous.

It localises to the late endosome membrane. The protein resides in the lysosome membrane. The protein localises to the membrane. Intramembrane-cleaving aspartic protease (I-CLiP) that cleaves type II membrane signal peptides in the hydrophobic plane of the membrane. Functions in FASLG, ITM2B and TNF processing. Catalyzes the intramembrane cleavage of the anchored fragment of shed TNF-alpha (TNF), which promotes the release of the intracellular domain (ICD) for signaling to the nucleus. Also responsible for the intramembrane cleavage of Fas antigen ligand FASLG, which promotes the release of the intracellular FasL domain (FasL ICD). Essential for degradation of the invariant chain CD74 that plays a central role in the function of antigen-presenting cells in the immune system. Plays a role in the regulation of innate and adaptive immunity. Catalyzes the intramembrane cleavage of the simian foamy virus envelope glycoprotein gp130 independently of prior ectodomain shedding by furin or furin-like proprotein convertase (PC)-mediated cleavage proteolysis. The protein is Signal peptide peptidase-like 2A of Homo sapiens (Human).